The chain runs to 950 residues: Leucine--tRNA ligase (950 aa).

The 'HIGH' region signature appears at 41 to 52 (PYPSGDGLHVGH). The 'KMSKS' region motif lies at 718–722 (KMSKS). Residue K721 participates in ATP binding.

It belongs to the class-I aminoacyl-tRNA synthetase family.

Its subcellular location is the cytoplasm. It carries out the reaction tRNA(Leu) + L-leucine + ATP = L-leucyl-tRNA(Leu) + AMP + diphosphate. This Rhodopirellula baltica (strain DSM 10527 / NCIMB 13988 / SH1) protein is Leucine--tRNA ligase.